The sequence spans 138 residues: MLGTQTTNSKPREYGGLIVSTIYIVLFFAILNLTVFFNKTNNINLILKNSCVVSFVVVWLLVCLQGIVRLKTCDGARYEISKFNQYLKLGSIYAKPNISFDEYKAKSSSYRKQTRGFWWMNFSLYLLGSLISIVVSLL.

Helical transmembrane passes span 17–37 (LIVSTIYIVLFFAILNLTVFF), 43–63 (INLILKNSCVVSFVVVWLLVC), and 117–137 (FWWMNFSLYLLGSLISIVVSL).

The protein localises to the cell membrane. This is an uncharacterized protein from Mycoplasma pneumoniae (strain ATCC 29342 / M129 / Subtype 1) (Mycoplasmoides pneumoniae).